The primary structure comprises 128 residues: Large ribosomal subunit protein uL24 (128 aa).

The protein belongs to the universal ribosomal protein uL24 family. In terms of assembly, part of the 50S ribosomal subunit.

One of two assembly initiator proteins, it binds directly to the 5'-end of the 23S rRNA, where it nucleates assembly of the 50S subunit. In terms of biological role, located at the polypeptide exit tunnel on the outside of the subunit. The polypeptide is Large ribosomal subunit protein uL24 (Pyrobaculum calidifontis (strain DSM 21063 / JCM 11548 / VA1)).